Consider the following 145-residue polypeptide: Large ribosomal subunit protein bL19 (145 aa).

This sequence belongs to the bacterial ribosomal protein bL19 family.

Functionally, this protein is located at the 30S-50S ribosomal subunit interface and may play a role in the structure and function of the aminoacyl-tRNA binding site. This chain is Large ribosomal subunit protein bL19, found in Brachyspira hyodysenteriae (strain ATCC 49526 / WA1).